Here is a 941-residue protein sequence, read N- to C-terminus: DNA mismatch repair protein MutS (941 aa).

Residue 613–620 (GPNMAGKS) participates in ATP binding.

It belongs to the DNA mismatch repair MutS family.

Its function is as follows. This protein is involved in the repair of mismatches in DNA. It is possible that it carries out the mismatch recognition step. This protein has a weak ATPase activity. In Clostridium botulinum (strain Alaska E43 / Type E3), this protein is DNA mismatch repair protein MutS.